A 955-amino-acid polypeptide reads, in one-letter code: Leucine--tRNA ligase (955 aa).

Positions 51–61 (PYLNGVLHAGH) match the 'HIGH' region motif. The 'KMSKS' region motif lies at 647-651 (KLSKS). Lysine 650 is a binding site for ATP.

This sequence belongs to the class-I aminoacyl-tRNA synthetase family.

Its subcellular location is the cytoplasm. The catalysed reaction is tRNA(Leu) + L-leucine + ATP = L-leucyl-tRNA(Leu) + AMP + diphosphate. This chain is Leucine--tRNA ligase, found in Methanococcus maripaludis (strain C5 / ATCC BAA-1333).